The primary structure comprises 328 residues: 5,10-methylenetetrahydromethanopterin reductase (328 aa).

It belongs to the mer family.

It is found in the cytoplasm. It catalyses the reaction 5-methyl-5,6,7,8-tetrahydromethanopterin + oxidized coenzyme F420-(gamma-L-Glu)(n) + H(+) = 5,10-methylenetetrahydromethanopterin + reduced coenzyme F420-(gamma-L-Glu)(n). Its pathway is one-carbon metabolism; methanogenesis from CO(2); methyl-coenzyme M from 5,10-methylene-5,6,7,8-tetrahydromethanopterin: step 1/2. In terms of biological role, catalyzes the reversible reduction of methylene-H(4)MPT to methyl-H(4)MPT. This Methanosarcina acetivorans (strain ATCC 35395 / DSM 2834 / JCM 12185 / C2A) protein is 5,10-methylenetetrahydromethanopterin reductase.